The primary structure comprises 758 residues: Ferrichrome receptor FcuA (758 aa).

Residues 1–36 (MNQTISSRAPQKRLAPRLLCVMIGAALGTLSASSWA) form the signal peptide. The short motif at 66–73 (DTITVVGA) is the TonB box element. One can recognise a TBDR plug domain in the interval 106–216 (DARNVPFNVI…VGGMINLEPK (111 aa)). In terms of domain architecture, TBDR beta-barrel spans 221–758 (TPLTRVTVDY…ALKLSVSMDF (538 aa)). Positions 741-758 (YIYQGDPRALKLSVSMDF) match the TonB C-terminal box motif.

Belongs to the TonB-dependent receptor family.

The protein localises to the cell outer membrane. Receptor for the hydroxamate siderophore, ferrichrome. Binds also to most other ferrichrome derivatives except enantio ferrichrome and ferric rhodotorulate. This Yersinia enterocolitica protein is Ferrichrome receptor FcuA (fcuA).